A 336-amino-acid chain; its full sequence is MIQKNWQELIKPNKVEFTSSGRTKATLVAEPLERGFGLTLGNALRRVLLSSLRGAAVTAVQIDGVLHEFSSIPGVREDVTDIVLNIKEIAIKMDGDDAKRMVVRKQGPGVVTAGDIQTVGDIEILNPEHVICTLDEGAEIRMEFTVNNGKGYVPAERNRAEDAPIGLIPVDSLYSPVKKVSYKVENTREGQVLDYDKLSMSIETDGSITGEDAVAFAARILQDQLGVFVNFDEPQKEAEEEAVTELAFNPALLKKVDELELSVRSANCLKNDNIVYIGDLIQKTEAEMLRTPNFGRKSLNEIKEVLASMGLHLGMEVPAWPPENIEDLAKRYEDQY.

The interval 1–232 is alpha N-terminal domain (alpha-NTD); that stretch reads MIQKNWQELI…DQLGVFVNFD (232 aa). Residues 248–336 are alpha C-terminal domain (alpha-CTD); the sequence is FNPALLKKVD…DLAKRYEDQY (89 aa).

This sequence belongs to the RNA polymerase alpha chain family. In terms of assembly, homodimer. The RNAP catalytic core consists of 2 alpha, 1 beta, 1 beta' and 1 omega subunit. When a sigma factor is associated with the core the holoenzyme is formed, which can initiate transcription.

It carries out the reaction RNA(n) + a ribonucleoside 5'-triphosphate = RNA(n+1) + diphosphate. In terms of biological role, DNA-dependent RNA polymerase catalyzes the transcription of DNA into RNA using the four ribonucleoside triphosphates as substrates. The protein is DNA-directed RNA polymerase subunit alpha of Rhizobium rhizogenes (strain K84 / ATCC BAA-868) (Agrobacterium radiobacter).